The primary structure comprises 122 residues: MKHVFKYLDFAEDREHAESVATKELKLDHVEKFAIRDLANDIKERGCVELVQPGGFDELVQIYEAGGDGIEPLNCGIESRKVAIAALLRVMREPDFQCLEMVHEIIRIARDLEAPVDAPLDC.

This is an uncharacterized protein from Escherichia coli (strain K12).